Here is a 377-residue protein sequence, read N- to C-terminus: Methionine import ATP-binding protein MetN 2 (377 aa).

One can recognise an ABC transporter domain in the interval 25 to 262; the sequence is IRIEHLSKTF…PKSAVARSFL (238 aa). 59–66 contributes to the ATP binding site; the sequence is GRSGAGKS.

This sequence belongs to the ABC transporter superfamily. Methionine importer (TC 3.A.1.24) family. The complex is composed of two ATP-binding proteins (MetN), two transmembrane proteins (MetI) and a solute-binding protein (MetQ).

Its subcellular location is the cell inner membrane. It carries out the reaction L-methionine(out) + ATP + H2O = L-methionine(in) + ADP + phosphate + H(+). The catalysed reaction is D-methionine(out) + ATP + H2O = D-methionine(in) + ADP + phosphate + H(+). In terms of biological role, part of the ABC transporter complex MetNIQ involved in methionine import. Responsible for energy coupling to the transport system. In Rhodopseudomonas palustris (strain ATCC BAA-98 / CGA009), this protein is Methionine import ATP-binding protein MetN 2.